We begin with the raw amino-acid sequence, 130 residues long: UPF0251 protein MmarC6_0272 (130 aa).

This sequence belongs to the UPF0251 family.

This is UPF0251 protein MmarC6_0272 from Methanococcus maripaludis (strain C6 / ATCC BAA-1332).